The chain runs to 81 residues: Costars family protein ABRACL (81 aa).

The residue at position 1 (Met1) is an N-acetylmethionine.

Belongs to the costars family.

The chain is Costars family protein ABRACL (Abracl) from Mus musculus (Mouse).